Consider the following 91-residue polypeptide: Large ribosomal subunit protein uL22 (91 aa).

Belongs to the universal ribosomal protein uL22 family. As to quaternary structure, part of the 50S ribosomal subunit.

In terms of biological role, this protein binds specifically to 23S rRNA; its binding is stimulated by other ribosomal proteins, e.g. L4, L17, and L20. It is important during the early stages of 50S assembly. It makes multiple contacts with different domains of the 23S rRNA in the assembled 50S subunit and ribosome. The globular domain of the protein is located near the polypeptide exit tunnel on the outside of the subunit, while an extended beta-hairpin is found that lines the wall of the exit tunnel in the center of the 70S ribosome. The protein is Large ribosomal subunit protein uL22 (rplV) of Pigeon pea witches'-broom phytoplasma.